Reading from the N-terminus, the 334-residue chain is Acryloyl-coenzyme A reductase (334 aa).

Residue Cys38 coordinates Zn(2+). Tyr39 lines the NADP(+) pocket. Residues His60, Asp90, Cys93, Cys96, Cys104, and Cys146 each contribute to the Zn(2+) site. NADP(+)-binding positions include 173 to 176 (SGGV) and 195 to 197 (TTS).

Belongs to the zinc-containing alcohol dehydrogenase family. In terms of assembly, monomer. It depends on Zn(2+) as a cofactor.

The catalysed reaction is propanoyl-CoA + NADP(+) = acryloyl-CoA + NADPH + H(+). Plays a role in autotrophic carbon fixation via the 3-hydroxypropionate/4-hydroxybutyrate cycle. Catalyzes the acryloyl-CoA dependent NADPH oxidation and formation of propionyl-CoA. Inactive towards 3-hydroxypropionyl-CoA, NADH and crotonyl-CoA. The protein is Acryloyl-coenzyme A reductase of Sulfurisphaera tokodaii (strain DSM 16993 / JCM 10545 / NBRC 100140 / 7) (Sulfolobus tokodaii).